The sequence spans 339 residues: Glycerol-3-phosphate dehydrogenase [NAD(P)+] (339 aa).

NADPH contacts are provided by S15, Y16, H36, and K110. Residues K110, G139, and T141 each coordinate sn-glycerol 3-phosphate. A143 is a binding site for NADPH. K195, D248, S258, R259, and N260 together coordinate sn-glycerol 3-phosphate. K195 acts as the Proton acceptor in catalysis. R259 serves as a coordination point for NADPH. NADPH-binding residues include V283 and E285.

This sequence belongs to the NAD-dependent glycerol-3-phosphate dehydrogenase family.

The protein resides in the cytoplasm. It catalyses the reaction sn-glycerol 3-phosphate + NAD(+) = dihydroxyacetone phosphate + NADH + H(+). It carries out the reaction sn-glycerol 3-phosphate + NADP(+) = dihydroxyacetone phosphate + NADPH + H(+). Its pathway is membrane lipid metabolism; glycerophospholipid metabolism. Functionally, catalyzes the reduction of the glycolytic intermediate dihydroxyacetone phosphate (DHAP) to sn-glycerol 3-phosphate (G3P), the key precursor for phospholipid synthesis. In Serratia proteamaculans (strain 568), this protein is Glycerol-3-phosphate dehydrogenase [NAD(P)+].